A 343-amino-acid polypeptide reads, in one-letter code: Heme A synthase (343 aa).

A run of 8 helical transmembrane segments spans residues 13-33, 96-116, 130-150, 165-185, 197-217, 258-278, 290-310, and 311-331; these read VALWLFVVAVLVFAMVVVGGA, HRLLGRLVGVVFAIPFVFFLI, VLLGLGGLQGVVGWWMVSSGL, LGLALALFVFVIWTALDAWAG, GWALAFLGAVFFQSLLGALVA, LHHRLMAYALFVAAIVAGVAA, LTAFVLVGVVCLQAGLGIWTL, and MTAVPLALGVLHQAGAAILLA. Residue His-260 participates in heme binding. Residue His-322 participates in heme binding.

This sequence belongs to the COX15/CtaA family. Type 2 subfamily. In terms of assembly, interacts with CtaB. Heme b is required as a cofactor.

The protein localises to the cell membrane. It catalyses the reaction Fe(II)-heme o + 2 A + H2O = Fe(II)-heme a + 2 AH2. Its pathway is porphyrin-containing compound metabolism; heme A biosynthesis; heme A from heme O: step 1/1. Catalyzes the conversion of heme O to heme A by two successive hydroxylations of the methyl group at C8. The first hydroxylation forms heme I, the second hydroxylation results in an unstable dihydroxymethyl group, which spontaneously dehydrates, resulting in the formyl group of heme A. This Caulobacter sp. (strain K31) protein is Heme A synthase.